Here is a 117-residue protein sequence, read N- to C-terminus: UPF0102 protein Clos_1471 (117 aa).

It belongs to the UPF0102 family.

The polypeptide is UPF0102 protein Clos_1471 (Alkaliphilus oremlandii (strain OhILAs) (Clostridium oremlandii (strain OhILAs))).